The sequence spans 856 residues: Probable alpha,alpha-trehalose-phosphate synthase [UDP-forming] 8 (856 aa).

S5 bears the Phosphoserine mark. Residue T32 is modified to Phosphothreonine. A glycosyltransferase region spans residues 57-541 (ERKIIVANML…AKSFMQDLER (485 aa)).

This sequence in the N-terminal section; belongs to the glycosyltransferase 20 family. The protein in the C-terminal section; belongs to the trehalose phosphatase family. In terms of tissue distribution, expressed in leaves, roots, stems and flowers.

The enzyme catalyses D-glucose 6-phosphate + UDP-alpha-D-glucose = alpha,alpha-trehalose 6-phosphate + UDP + H(+). This is Probable alpha,alpha-trehalose-phosphate synthase [UDP-forming] 8 (TPS8) from Arabidopsis thaliana (Mouse-ear cress).